The primary structure comprises 225 residues: Fibroblast growth factor 11 (225 aa).

The interval 1 to 28 (MAALASSLIRQKREVREPGGSRPVSAQR) is disordered.

It belongs to the heparin-binding growth factors family. As to expression, brain and eye, and in a segmental pattern of the embryonic body wall. In adult olfactory bulb, hippocampus and most concentrated in Purkinje cell layer of the cerebellum.

The protein resides in the nucleus. Its function is as follows. Probably involved in nervous system development and function. The chain is Fibroblast growth factor 11 (Fgf11) from Mus musculus (Mouse).